Here is a 436-residue protein sequence, read N- to C-terminus: Peptidase B (436 aa).

Lys201 and Asp206 together coordinate Mn(2+). Lys213 is an active-site residue. The Mn(2+) site is built by Asp224, Asp283, and Glu285. The active site involves Arg287.

Belongs to the peptidase M17 family. As to quaternary structure, homohexamer. It depends on Mn(2+) as a cofactor.

It localises to the cytoplasm. It catalyses the reaction Release of an N-terminal amino acid, Xaa, from a peptide or arylamide. Xaa is preferably Glu or Asp but may be other amino acids, including Leu, Met, His, Cys and Gln.. In terms of biological role, probably plays an important role in intracellular peptide degradation. This Pectobacterium carotovorum subsp. carotovorum (strain PC1) protein is Peptidase B.